Consider the following 123-residue polypeptide: Ribosome-binding factor A (123 aa).

Belongs to the RbfA family. As to quaternary structure, monomer. Binds 30S ribosomal subunits, but not 50S ribosomal subunits or 70S ribosomes.

The protein resides in the cytoplasm. In terms of biological role, one of several proteins that assist in the late maturation steps of the functional core of the 30S ribosomal subunit. Associates with free 30S ribosomal subunits (but not with 30S subunits that are part of 70S ribosomes or polysomes). Required for efficient processing of 16S rRNA. May interact with the 5'-terminal helix region of 16S rRNA. This is Ribosome-binding factor A from Prochlorococcus marinus (strain NATL1A).